The following is a 74-amino-acid chain: Large ribosomal subunit protein uL29 (74 aa).

Belongs to the universal ribosomal protein uL29 family.

The protein is Large ribosomal subunit protein uL29 of Nostoc sp. (strain PCC 7120 / SAG 25.82 / UTEX 2576).